The primary structure comprises 302 residues: UDP-N-acetylenolpyruvoylglucosamine reductase (302 aa).

Residues 30–196 (IGGPADLFVE…IAATLEMKKG (167 aa)) form the FAD-binding PCMH-type domain. Arg174 is an active-site residue. The active-site Proton donor is Ser225. Glu295 is a catalytic residue.

The protein belongs to the MurB family. The cofactor is FAD.

Its subcellular location is the cytoplasm. The catalysed reaction is UDP-N-acetyl-alpha-D-muramate + NADP(+) = UDP-N-acetyl-3-O-(1-carboxyvinyl)-alpha-D-glucosamine + NADPH + H(+). It functions in the pathway cell wall biogenesis; peptidoglycan biosynthesis. Cell wall formation. This chain is UDP-N-acetylenolpyruvoylglucosamine reductase, found in Anoxybacillus flavithermus (strain DSM 21510 / WK1).